Reading from the N-terminus, the 354-residue chain is Short-chain dehydrogenase/reductase SAT2 (354 aa).

4 residues coordinate NADP(+): Ile-31, Asp-85, Arg-201, and Val-233.

This sequence belongs to the short-chain dehydrogenases/reductases (SDR) family.

It functions in the pathway mycotoxin biosynthesis. Its function is as follows. Short-chain dehydrogenase/reductase; part of the satratoxin SC1 cluster involved in the biosynthesis of satratoxins, trichothecene mycotoxins that are associated with human food poisonings. Satratoxins are suggested to be made by products of multiple gene clusters (SC1, SC2 and SC3) that encode 21 proteins in all, including polyketide synthases, acetyltransferases, and other enzymes expected to modify the trichothecene skeleton. SC1 encodes 10 proteins, SAT1 to SAT10. The largest are SAT8, which encodes a putative polyketide synthase (PKS) with a conventional non-reducing architecture, and SAT10, a putative protein containing four ankyrin repeats and thus may be involved in protein scaffolding. The putative short-chain reductase SAT3 may assist the PKS in some capacity. SAT6 contains a secretory lipase domain and acts probably as a trichothecene esterase. SAT5 encodes a putative acetyltransferase, and so, with SAT6, may affect endogenous protection from toxicity. The probable transcription factor SAT9 may regulate the expression of the SC1 cluster. SC2 encodes proteins SAT11 to SAT16, the largest of which encodes the putative reducing PKS SAT13. SAT11 is a cytochrome P450 monooxygenase, while SAT14 and SAT16 are probable acetyltransferases. The SC2 cluster may be regulated by the transcription factor SAT15. SC3 is a small cluster that encodes 5 proteins, SAT17 to SAT21. SAT21 is a putative MFS-type transporter which may have a role in exporting secondary metabolites. The four other proteins putatively encoded in SC3 include the taurine hydroxylase-like protein SAT17, the O-methyltransferase SAT18, the acetyltransferase SAT19, and the Cys6-type zinc finger SAT20, the latter being probably involved in regulation of SC3 expression. This chain is Short-chain dehydrogenase/reductase SAT2, found in Stachybotrys chartarum (strain CBS 109288 / IBT 7711) (Toxic black mold).